The following is a 51-amino-acid chain: uncharacterized protein (51 aa).

The disordered stretch occupies residues 1 to 42 (MKMKTNKYMNMVRPAPPRRADPEGVRDPSTMGGGPNPFLRRS).

Its subcellular location is the mitochondrion. This is an uncharacterized protein from Saccharomyces cerevisiae (strain ATCC 204508 / S288c) (Baker's yeast).